A 121-amino-acid polypeptide reads, in one-letter code: Large ribosomal subunit protein uL18 (121 aa).

Residues 1–22 show a composition bias toward basic residues; that stretch reads MIKKPDKKTLRQGKHKRVRRKV. The segment at 1-23 is disordered; sequence MIKKPDKKTLRQGKHKRVRRKVA.

This sequence belongs to the universal ribosomal protein uL18 family. Part of the 50S ribosomal subunit; part of the 5S rRNA/L5/L18/L25 subcomplex. Contacts the 5S and 23S rRNAs.

Functionally, this is one of the proteins that bind and probably mediate the attachment of the 5S RNA into the large ribosomal subunit, where it forms part of the central protuberance. This Syntrophomonas wolfei subsp. wolfei (strain DSM 2245B / Goettingen) protein is Large ribosomal subunit protein uL18.